The following is a 228-amino-acid chain: Death domain-containing membrane protein NRADD (228 aa).

Over 1–52 (MLYNVSKGVVYSDTALQGQDGDREGMWVGAGGALAPNTSSLFPPEPPGASSN) the chain is Extracellular. Residues Asn4 and Asn37 are each glycosylated (N-linked (GlcNAc...) asparagine). The helical; Signal-anchor for type III membrane protein transmembrane segment at 53-73 (IIPVYCALLATVILGLLAYVA) threads the bilayer. Topologically, residues 74–228 (FKCWRSHKQR…SSPAESSSVV (155 aa)) are cytoplasmic. The interval 87-122 (AKARTVELGDPDRDQRRGDSNVFVDSPPSLEPCIPS) is disordered. The span at 90 to 105 (RTVELGDPDRDQRRGD) shows a compositional bias: basic and acidic residues. Residues 143-222 (EEVQRLLMMG…DVVQVLSSPA (80 aa)) enclose the Death domain.

As to quaternary structure, interacts with NGFR. Interacts with NTRK1. Interacts with SORT1. As to expression, detected in lung and testis.

Its subcellular location is the cell membrane. It localises to the nucleus. In terms of biological role, modulates NTRK1 signaling. Can activate several intracellular signaling pathways, leading to activation of JUN. Promotes apoptosis. Promotes translocation of SORT1 to the cell membrane, and thereby hinders lysosomal degradation of SOTR1 and promotes its interaction with NGFR. The polypeptide is Death domain-containing membrane protein NRADD (Nradd) (Mus musculus (Mouse)).